The chain runs to 643 residues: 1-deoxy-D-xylulose-5-phosphate synthase (643 aa).

Residues histidine 72 and 113-115 (GHA) each bind thiamine diphosphate. Residue aspartate 144 participates in Mg(2+) binding. Thiamine diphosphate contacts are provided by residues 145–146 (GA), asparagine 174, tyrosine 287, and glutamate 370. Asparagine 174 is a Mg(2+) binding site.

The protein belongs to the transketolase family. DXPS subfamily. As to quaternary structure, homodimer. Requires Mg(2+) as cofactor. Thiamine diphosphate is required as a cofactor.

It carries out the reaction D-glyceraldehyde 3-phosphate + pyruvate + H(+) = 1-deoxy-D-xylulose 5-phosphate + CO2. The protein operates within metabolic intermediate biosynthesis; 1-deoxy-D-xylulose 5-phosphate biosynthesis; 1-deoxy-D-xylulose 5-phosphate from D-glyceraldehyde 3-phosphate and pyruvate: step 1/1. Catalyzes the acyloin condensation reaction between C atoms 2 and 3 of pyruvate and glyceraldehyde 3-phosphate to yield 1-deoxy-D-xylulose-5-phosphate (DXP). This Parasynechococcus marenigrum (strain WH8102) protein is 1-deoxy-D-xylulose-5-phosphate synthase.